Reading from the N-terminus, the 356-residue chain is D-xylulose reductase (356 aa).

Residues Cys44, His69, and Glu155 each contribute to the Zn(2+) site. 179 to 184 (GAGPIG) is an NAD(+) binding site.

Belongs to the zinc-containing alcohol dehydrogenase family. Zn(2+) serves as cofactor.

The catalysed reaction is xylitol + NAD(+) = D-xylulose + NADH + H(+). Its pathway is carbohydrate degradation; L-arabinose degradation via L-arabinitol; D-xylulose 5-phosphate from L-arabinose (fungal route): step 4/5. This chain is D-xylulose reductase (XYL2), found in Saccharomyces cerevisiae (strain ATCC 204508 / S288c) (Baker's yeast).